A 1107-amino-acid polypeptide reads, in one-letter code: Rho GTPase-activating protein 45 (1107 aa).

The segment at 1 to 99 is disordered; it reads MFSRKKRELM…SPPESGEGPF (99 aa). The segment covering 37-55 has biased composition (low complexity); the sequence is DSSNDLASSPPSNSSPVSS. The segment covering 56 to 66 has biased composition (polar residues); the sequence is GTLKRPSSLSR. Coiled-coil stretches lie at residues 103–132 and 363–485; these read EDIS…EELK and NMRR…QSDQ. The F-BAR domain occupies 261-524; it reads EDVDVILQRS…SSKLYDLGQQ (264 aa). Basic and acidic residues-rich tracts occupy residues 414–423, 434–444, and 573–588; these read NATRAEEEQS, RRAEEEAKNRA, and ENKE…ERRG. 2 disordered regions span residues 414-444 and 564-595; these read NATR…KNRA and FNSQ…HQVH. Residues 671 to 716 form a Phorbol-ester/DAG-type zinc finger; sequence THRLRKLRTPSKCRECNSYVYFQGAECEECSLACHKKCLETLAIQC. The 213-residue stretch at 730-942 folds into the Rho-GAP domain; it reads RDFSETALRS…TLIIFYSTIF (213 aa). The interval 981-1036 is disordered; sequence LTPEYQIPVFKEPGASTVESDSESDGAEDIPGTWKPQTTRGHLTKEASVTSAEDIP. A compositionally biased stretch (polar residues) spans 1015-1031; that stretch reads KPQTTRGHLTKEASVTS.

It localises to the cytoplasm. It is found in the cell projection. The protein resides in the ruffle membrane. In terms of biological role, contains a GTPase activator for the Rho-type GTPases (RhoGAP) domain that would be able to negatively regulate the actin cytoskeleton as well as cell spreading. However, also contains N-terminally a BAR-domin which is able to play an autoinhibitory effect on this RhoGAP activity. This chain is Rho GTPase-activating protein 45, found in Xenopus laevis (African clawed frog).